We begin with the raw amino-acid sequence, 334 residues long: Aspartate carbamoyltransferase catalytic subunit (334 aa).

Residues Arg-71 and Thr-72 each contribute to the carbamoyl phosphate site. Lys-99 lines the L-aspartate pocket. Carbamoyl phosphate is bound by residues Arg-121, His-151, and Gln-154. Residues Arg-184 and Arg-239 each contribute to the L-aspartate site. Carbamoyl phosphate contacts are provided by Gly-280 and Pro-281.

This sequence belongs to the aspartate/ornithine carbamoyltransferase superfamily. ATCase family. Heterododecamer (2C3:3R2) of six catalytic PyrB chains organized as two trimers (C3), and six regulatory PyrI chains organized as three dimers (R2).

The enzyme catalyses carbamoyl phosphate + L-aspartate = N-carbamoyl-L-aspartate + phosphate + H(+). The protein operates within pyrimidine metabolism; UMP biosynthesis via de novo pathway; (S)-dihydroorotate from bicarbonate: step 2/3. Catalyzes the condensation of carbamoyl phosphate and aspartate to form carbamoyl aspartate and inorganic phosphate, the committed step in the de novo pyrimidine nucleotide biosynthesis pathway. The protein is Aspartate carbamoyltransferase catalytic subunit of Pseudomonas syringae pv. syringae (strain B728a).